The following is a 118-amino-acid chain: MSAPNSYDDEELEELLRRKAAQEQKRLEEERKRKAELESQKESILRVILTPEARQRLTNIKLVKPEFAESLENQLIALAQSGRIKVPLTDEELKQILEQISEQNRRDFKIQIRERGWK.

The protein belongs to the PDCD5 family.

This is DNA-binding protein M164_1799 from Saccharolobus islandicus (strain M.16.4 / Kamchatka #3) (Sulfolobus islandicus).